Consider the following 650-residue polypeptide: Threonine--tRNA ligase, chloroplastic/mitochondrial 2 (650 aa).

The Zn(2+) site is built by cysteine 347, histidine 398, and histidine 524.

This sequence belongs to the class-II aminoacyl-tRNA synthetase family.

It localises to the plastid. It is found in the chloroplast. The protein localises to the mitochondrion. It catalyses the reaction tRNA(Thr) + L-threonine + ATP = L-threonyl-tRNA(Thr) + AMP + diphosphate + H(+). The polypeptide is Threonine--tRNA ligase, chloroplastic/mitochondrial 2 (Arabidopsis thaliana (Mouse-ear cress)).